An 86-amino-acid chain; its full sequence is Small ribosomal subunit protein bS20 (86 aa).

The protein belongs to the bacterial ribosomal protein bS20 family.

Its function is as follows. Binds directly to 16S ribosomal RNA. The chain is Small ribosomal subunit protein bS20 from Mycolicibacterium vanbaalenii (strain DSM 7251 / JCM 13017 / BCRC 16820 / KCTC 9966 / NRRL B-24157 / PYR-1) (Mycobacterium vanbaalenii).